A 1537-amino-acid chain; its full sequence is DNA (cytosine-5)-methyltransferase 1 (1537 aa).

The segment covering 1-13 has biased composition (pro residues); sequence MPARSAPPPPALP. 2 disordered regions span residues 1 to 34 and 97 to 232; these read MPAR…SEKE and RASN…DEKR. Residues 8–105 form the DMAP1-binding domain; sequence PPPALPPALR…SRASNGCAGN (98 aa). The span at 21-34 shows a compositional bias: basic and acidic residues; that stretch reads RDLERDEDSLSEKE. Over residues 129–154 the composition is skewed to low complexity; the sequence is SSSSSSSSSSSSSSSSSSSSSLLPAP. Positions 171–194 are enriched in polar residues; that stretch reads SPASSRVTRSSGRQPTILSVFSKG. Residues 182–194 are interaction with PCNA; the sequence is GRQPTILSVFSKG. A compositionally biased stretch (acidic residues) spans 215-227; the sequence is KDEEEEEELEEKE. Residues Cys263, Cys266, and His329 each contribute to the Zn(2+) site. Ser420 is subject to Phosphoserine. Residues 558–604 form a CXXC-type zinc finger; the sequence is NAMKRRRCGVCEVCQQPECGKCKACQNMVKFGGSGRSKQACLQRRCP. The Zn(2+) site is built by Cys565, Cys568, Cys571, Cys576, Cys579, Cys582, Cys598, and Cys603. A disordered region spans residues 614–638; that stretch reads DEEVDDNIPEMPSPKKMLQGRKKKQ. 2 BAH domains span residues 667 to 791 and 883 to 1011; these read ETLE…ETPP and HYRK…EDPP. A disordered region spans residues 1006 to 1050; it reads SFEDPPNHARSSGNKGKGKGKGKGKGKGKSSTTCEQSEPEPTELK. Tandem repeats lie at residues 1020–1021, 1022–1023, 1024–1025, 1026–1027, 1028–1029, 1030–1031, and 1032–1033. Residues 1020-1035 form an 8 X 2 AA tandem repeats of K-G region; the sequence is KGKGKGKGKGKGKGKS. The span at 1021 to 1033 shows a compositional bias: basic residues; it reads GKGKGKGKGKGKG. The 8; approximate repeat unit spans residues 1034-1035; sequence KS. The region spanning 1054-1513 is the SAM-dependent MTase C5-type domain; sequence LRTLDVFSGC…LEIRACVGAR (460 aa). S-adenosyl-L-methionine-binding positions include Ser1061, 1065 to 1066, 1083 to 1084, 1105 to 1106, and Cys1106; these read GL, EM, and DC. The active site involves Cys1141. Residues Asn1492 and Val1494 each contribute to the S-adenosyl-L-methionine site. The segment at 1518–1537 is disordered; the sequence is SGAAVAPPAPEKMEMTAAAD.

Belongs to the class I-like SAM-binding methyltransferase superfamily. C5-methyltransferase family. As to quaternary structure, homodimer. Interacts with PCNA. As to expression, testis and lung.

The protein resides in the nucleus. The enzyme catalyses a 2'-deoxycytidine in DNA + S-adenosyl-L-methionine = a 5-methyl-2'-deoxycytidine in DNA + S-adenosyl-L-homocysteine + H(+). Functionally, methylates CpG residues. Preferentially methylates hemimethylated DNA. It is responsible for maintaining methylation patterns established in development. Mediates transcriptional repression by direct binding to HDAC2. Plays a role in promoter hypermethylation and transcriptional silencing of tumor suppressor genes (TSGs) or other tumor-related genes. Also required to maintain a transcriptionally repressive state of genes in undifferentiated embryonic stem cells (ESCs). Associates at promoter regions of tumor suppressor genes (TSGs) leading to their gene silencing. The sequence is that of DNA (cytosine-5)-methyltransferase 1 (DNMT1) from Gallus gallus (Chicken).